The chain runs to 51 residues: MERAGVPGFSPRRSSVEAKMQSTSCSVRKSSTVTAWPAVVLLLSWGQRRGG.

Residues 1–22 are disordered; the sequence is MERAGVPGFSPRRSSVEAKMQS.

As to quaternary structure, interacts with aquaporin AQP2.

Its function is as follows. Reduces filamentous actin fibers by interacting with aquaporin AQP2 which leads to inhibition of the expression of SEPTIN4 and integrin ITGB4. Also inhibits the activation of the EREG/EGFR signaling pathway through interaction with AQP2. The chain is Micropeptide inhibiting actin cytoskeleton from Homo sapiens (Human).